The primary structure comprises 402 residues: Phosphoglycerate kinase (402 aa).

Residues 24 to 26 (DLN), Arg-39, 62 to 65 (HLGR), Arg-121, and Arg-161 each bind substrate. ATP is bound by residues Lys-211, Gly-299, Glu-330, and 359–362 (GGDS).

The protein belongs to the phosphoglycerate kinase family. In terms of assembly, monomer.

The protein resides in the cytoplasm. The catalysed reaction is (2R)-3-phosphoglycerate + ATP = (2R)-3-phospho-glyceroyl phosphate + ADP. It participates in carbohydrate degradation; glycolysis; pyruvate from D-glyceraldehyde 3-phosphate: step 2/5. The chain is Phosphoglycerate kinase from Mycolicibacterium gilvum (strain PYR-GCK) (Mycobacterium gilvum (strain PYR-GCK)).